The chain runs to 174 residues: Large ribosomal subunit protein uL22 (174 aa).

Belongs to the universal ribosomal protein uL22 family. As to quaternary structure, part of the 50S ribosomal subunit.

Its function is as follows. This protein binds specifically to 23S rRNA. It makes multiple contacts with different domains of the 23S rRNA in the assembled 50S subunit and ribosome. In terms of biological role, the globular domain of the protein is located near the polypeptide exit tunnel on the outside of the subunit, while an extended beta-hairpin is found that lines the wall of the exit tunnel in the center of the 70S ribosome. This chain is Large ribosomal subunit protein uL22, found in Nanoarchaeum equitans (strain Kin4-M).